A 553-amino-acid polypeptide reads, in one-letter code: MAAPDSLSHGPSGDSVCLQEEKVSAEMMLVDCLTNYQELVSFDDVIVDFTQEEWTSLNPDQRTLYREVMLENYKNLATVGYQLIKPSVISWLEQEEFSTGQKIVFPEWKIQLETQCSASQQELLRGNISNGMQTQTGSDTGRGLCDGTQYGDFFSELSPLRTVMKTRPAQDNYDSSQCRKDFLMLQRKKCAGEKLSEFNQSEETGAIPGKAYQKMATQEKCFECSDCGKSFMNQSHLQTHQRTHSGDKLYELNECGRSFINSRLAVLIETLNAKKPHRCKECGKGYRYPAYLNIHMRTHTGEKPYECKECGKAFNYSNSFQIHGRTHTGEKPYVCNQCGKAFTQHSGLSIHVRSHNGDKPYACKECGKAFLTSSRLIQHIRTHTGEKPFVCVKCGKAFAISSNLNGHLKMHAEEKTCECKICGKAFGYLSCLNNHMRTHNAKKSYTCKECGKAFNYSTHLKIHMRIHTGEKPYECKQCGKAFSHSTSFQIHERTHTGEKPYECKECGKAFICPSSFRIHEISHTHTEEKPYKCQQCGKAYSHPRSLRRHERIH.

The KRAB domain maps to 40 to 111 (VSFDDVIVDF…KIVFPEWKIQ (72 aa)). 11 C2H2-type zinc fingers span residues 222 to 244 (FECSDCGKSFMNQSHLQTHQRTH), 277 to 299 (HRCKECGKGYRYPAYLNIHMRTH), 305 to 327 (YECKECGKAFNYSNSFQIHGRTH), 333 to 355 (YVCNQCGKAFTQHSGLSIHVRSH), 361 to 383 (YACKECGKAFLTSSRLIQHIRTH), 389 to 411 (FVCVKCGKAFAISSNLNGHLKMH), 417 to 439 (CECKICGKAFGYLSCLNNHMRTH), 445 to 467 (YTCKECGKAFNYSTHLKIHMRIH), 473 to 495 (YECKQCGKAFSHSTSFQIHERTH), 501 to 525 (YECKECGKAFICPSSFRIHEISHTH), and 531 to 553 (YKCQQCGKAYSHPRSLRRHERIH).

It localises to the nucleus. In terms of biological role, may be involved in transcriptional regulation. This is Zinc finger protein 426 (Znf426) from Rattus norvegicus (Rat).